A 491-amino-acid chain; its full sequence is Serralysin (491 aa).

Residues 1-16 (MGSFLLKKAVGLSNIS) constitute a propeptide that is removed on maturation. A Zn(2+)-binding site is contributed by His-186. Glu-187 is an active-site residue. Zn(2+) contacts are provided by His-190, His-196, and Tyr-226. Ca(2+)-binding residues include Arg-263, Gly-265, Asp-295, Gly-297, Gly-298, Asp-300, Thr-337, Glu-339, Gly-344, Gly-346, Asp-348, Asn-353, Ala-355, Asn-357, Gly-361, Gly-362, Gly-364, Asp-366, Gly-370, Gly-373, Asp-384, Gly-388, Gly-389, Gly-391, Asp-402, Asp-409, and Asp-419. Hemolysin-type calcium-binding repeat units lie at residues 342 to 359 (IGGFGNDIIHGNDADNTL), 360 to 377 (IGGEGDDIIYGHSGNNTI), and 378 to 395 (YGGRGQDTLHGGTGSNTF).

It belongs to the peptidase M10B family. The cofactor is Ca(2+). It depends on Zn(2+) as a cofactor.

It is found in the secreted. The enzyme catalyses Preferential cleavage of bonds with hydrophobic residues in P1'.. With respect to regulation, ca(2+) increases protease activity. In terms of biological role, one of the virulence factors produced during swarmer cell differentiation of the bacteria, which seems to be associated with pathogenesis. The protease activity is limited to IgA1, IgA2, as well as IgG degradation. In Proteus mirabilis, this protein is Serralysin (zapA).